A 375-amino-acid chain; its full sequence is Alanine racemase (375 aa).

Residue lysine 40 is the Proton acceptor; specific for D-alanine of the active site. The residue at position 40 (lysine 40) is an N6-(pyridoxal phosphate)lysine. Arginine 140 serves as a coordination point for substrate. Tyrosine 268 serves as the catalytic Proton acceptor; specific for L-alanine. Residue methionine 315 participates in substrate binding.

Belongs to the alanine racemase family. The cofactor is pyridoxal 5'-phosphate.

The enzyme catalyses L-alanine = D-alanine. It functions in the pathway amino-acid biosynthesis; D-alanine biosynthesis; D-alanine from L-alanine: step 1/1. In terms of biological role, catalyzes the interconversion of L-alanine and D-alanine. May also act on other amino acids. The polypeptide is Alanine racemase (alr) (Limosilactobacillus reuteri (strain DSM 20016) (Lactobacillus reuteri)).